A 478-amino-acid chain; its full sequence is Glutamyl-tRNA(Gln) amidotransferase subunit A (478 aa).

Active-site charge relay system residues include Lys-72 and Ser-147. The active-site Acyl-ester intermediate is the Ser-171.

It belongs to the amidase family. GatA subfamily. Heterotrimer of A, B and C subunits.

It catalyses the reaction L-glutamyl-tRNA(Gln) + L-glutamine + ATP + H2O = L-glutaminyl-tRNA(Gln) + L-glutamate + ADP + phosphate + H(+). Allows the formation of correctly charged Gln-tRNA(Gln) through the transamidation of misacylated Glu-tRNA(Gln) in organisms which lack glutaminyl-tRNA synthetase. The reaction takes place in the presence of glutamine and ATP through an activated gamma-phospho-Glu-tRNA(Gln). The sequence is that of Glutamyl-tRNA(Gln) amidotransferase subunit A from Saccharolobus solfataricus (strain ATCC 35092 / DSM 1617 / JCM 11322 / P2) (Sulfolobus solfataricus).